Reading from the N-terminus, the 418-residue chain is NADH-quinone oxidoreductase subunit D (418 aa).

Belongs to the complex I 49 kDa subunit family. As to quaternary structure, NDH-1 is composed of 14 different subunits. Subunits NuoB, C, D, E, F, and G constitute the peripheral sector of the complex.

It is found in the cell inner membrane. It catalyses the reaction a quinone + NADH + 5 H(+)(in) = a quinol + NAD(+) + 4 H(+)(out). In terms of biological role, NDH-1 shuttles electrons from NADH, via FMN and iron-sulfur (Fe-S) centers, to quinones in the respiratory chain. The immediate electron acceptor for the enzyme in this species is believed to be ubiquinone. Couples the redox reaction to proton translocation (for every two electrons transferred, four hydrogen ions are translocated across the cytoplasmic membrane), and thus conserves the redox energy in a proton gradient. This is NADH-quinone oxidoreductase subunit D from Bordetella avium (strain 197N).